The sequence spans 487 residues: uncharacterized protein (487 aa).

It belongs to the UbiD family.

This is an uncharacterized protein from Aeropyrum pernix (strain ATCC 700893 / DSM 11879 / JCM 9820 / NBRC 100138 / K1).